Consider the following 158-residue polypeptide: Transcription elongation factor GreA (158 aa).

A coiled-coil region spans residues 48–74; it reads EYDAAKNRQGFIEGRIKELNDKIARAE.

This sequence belongs to the GreA/GreB family.

In terms of biological role, necessary for efficient RNA polymerase transcription elongation past template-encoded arresting sites. The arresting sites in DNA have the property of trapping a certain fraction of elongating RNA polymerases that pass through, resulting in locked ternary complexes. Cleavage of the nascent transcript by cleavage factors such as GreA or GreB allows the resumption of elongation from the new 3'terminus. GreA releases sequences of 2 to 3 nucleotides. This Syntrophotalea carbinolica (strain DSM 2380 / NBRC 103641 / GraBd1) (Pelobacter carbinolicus) protein is Transcription elongation factor GreA.